The following is a 155-amino-acid chain: Nucleoside diphosphate kinase, cytosolic (155 aa).

Residues Lys-16, Phe-64, Arg-92, Thr-98, Arg-109, and Asn-119 each coordinate ATP. The active-site Pros-phosphohistidine intermediate is His-122.

It belongs to the NDK family. In terms of assembly, homohexamer. The cofactor is Mg(2+).

The protein resides in the cytoplasm. It catalyses the reaction a 2'-deoxyribonucleoside 5'-diphosphate + ATP = a 2'-deoxyribonucleoside 5'-triphosphate + ADP. The enzyme catalyses a ribonucleoside 5'-diphosphate + ATP = a ribonucleoside 5'-triphosphate + ADP. In terms of biological role, major role in the synthesis of nucleoside triphosphates other than ATP. The chain is Nucleoside diphosphate kinase, cytosolic (ndkC-1) from Dictyostelium discoideum (Social amoeba).